The primary structure comprises 187 residues: Large ribosomal subunit protein uL6 (187 aa).

It belongs to the universal ribosomal protein uL6 family. In terms of assembly, part of the 50S ribosomal subunit.

This protein binds to the 23S rRNA, and is important in its secondary structure. It is located near the subunit interface in the base of the L7/L12 stalk, and near the tRNA binding site of the peptidyltransferase center. This is Large ribosomal subunit protein uL6 from Chloroflexus aggregans (strain MD-66 / DSM 9485).